Reading from the N-terminus, the 156-residue chain is Male-specific protein scotti (156 aa).

Residues 26-48 (TADAGDDADTLEDGQQQQQQQHQ) form a disordered region. Residue asparagine 137 is glycosylated (N-linked (GlcNAc...) asparagine).

Belongs to the male-specific scotti family.

In terms of biological role, post-meiotically transcribed gene that has a role in late spermiogenesis; required for actin cone progression during spermatid individualization. The polypeptide is Male-specific protein scotti (Drosophila erecta (Fruit fly)).